The following is a 718-amino-acid chain: Polyribonucleotide nucleotidyltransferase (718 aa).

Mg(2+) contacts are provided by aspartate 493 and aspartate 499. The 60-residue stretch at 560-619 (PRVIKKQIDPDKIRNVIGPGGKMINKIIDETGVKIDIEPDGLIYISSSDAEQAEQAIKAI) folds into the KH domain. Positions 629–697 (GEVYLGKVVR…ERGRINLSRK (69 aa)) constitute an S1 motif domain. The tract at residues 695-718 (SRKQALGEEDGKTNNDDKKSTKKT) is disordered. Residues 699–718 (ALGEEDGKTNNDDKKSTKKT) are compositionally biased toward basic and acidic residues.

This sequence belongs to the polyribonucleotide nucleotidyltransferase family. The cofactor is Mg(2+).

It is found in the cytoplasm. It catalyses the reaction RNA(n+1) + phosphate = RNA(n) + a ribonucleoside 5'-diphosphate. Its function is as follows. Involved in mRNA degradation. Catalyzes the phosphorolysis of single-stranded polyribonucleotides processively in the 3'- to 5'-direction. The sequence is that of Polyribonucleotide nucleotidyltransferase from Natranaerobius thermophilus (strain ATCC BAA-1301 / DSM 18059 / JW/NM-WN-LF).